Consider the following 273-residue polypeptide: Hydroxynaphthalene reductase arp2 (273 aa).

Residues I24, D70, N97, and R130 each contribute to the NADP(+) site. Residues S146 and S147 each act as proton donor in the active site. Residues Y160, K164, V193, and S195 each coordinate NADP(+). The Proton acceptor role is filled by Y160. K164 (lowers pKa of active site Tyr) is an active-site residue.

This sequence belongs to the short-chain dehydrogenases/reductases (SDR) family.

The protein localises to the endosome. It functions in the pathway pigment biosynthesis; melanin biosynthesis. With respect to regulation, tricyclazole and pyroquilon inhibit arp2 hydroxynaphtalene reductase activity. Functionally, hydroxynaphthalene reductase; part of the gene cluster that mediates the biosynthesis of dihydroxynaphthalene (DHN)-melanin, a bluish-green pigment and a structural component of the conidial wall. The first step of the pathway is the production of the heptaketide naphtopyrone YWA1 by the polyketide synthase alb1 though condensation of acetyl-CoA with malonyl-CoA. The naphtopyrone YWA1 is then converted to the pentaketide 1,3,6,8-tetrahydroxynaphthalene (1,3,6,8-THN) by the heptaketide hydrolyase ayg1 though chain-length shortening. 1,3,6,8-THN is substrate of the hydroxynaphthalene reductase arp2 to yield scytalone. The scytalone dehydratase arp1 then reduces scytalone to 1,3,8-THN. 1,3,8-THN is also substrate of the hydroxynaphthalene reductase arp2 to yield vermelone. Vermelone is further converted by the multicopper oxidase abr1 to 1,8-DHN. Finally the laccase abr2 transforms 1,8-DHN to DHN-melanin. DHN-melanin biosynthesis appears to be initiated in endosomes where early enzymes (abl1, ayg1, arp1 and arp2) localize, with exocytosis leading to melanin deposition on the cell surface where late enzymes (abr1 and abr2) localize. DHN-melanin is an important structural component of the outer cell wall and is required for the presence of conidial surface hydrophobins. DHN-melanin also plays a crucial role in fungal virulence, including a protective role against the host's immune defenses. DHN-melanin also protects conidia against amoeba predation. This Aspergillus fumigatus (strain ATCC MYA-4609 / CBS 101355 / FGSC A1100 / Af293) (Neosartorya fumigata) protein is Hydroxynaphthalene reductase arp2.